A 92-amino-acid polypeptide reads, in one-letter code: Co-chaperonin GroES (92 aa).

This sequence belongs to the GroES chaperonin family. In terms of assembly, heptamer of 7 subunits arranged in a ring. Interacts with the chaperonin GroEL.

The protein localises to the cytoplasm. Its function is as follows. Together with the chaperonin GroEL, plays an essential role in assisting protein folding. The GroEL-GroES system forms a nano-cage that allows encapsulation of the non-native substrate proteins and provides a physical environment optimized to promote and accelerate protein folding. GroES binds to the apical surface of the GroEL ring, thereby capping the opening of the GroEL channel. The protein is Co-chaperonin GroES of Thermotoga petrophila (strain ATCC BAA-488 / DSM 13995 / JCM 10881 / RKU-1).